Here is a 966-residue protein sequence, read N- to C-terminus: Mitogen-activated protein kinase kinase kinase 13 (966 aa).

Disordered regions lie at residues 1-22, 30-49, and 90-114; these read MANF…SESK, ELTA…QQEK, and HDES…SGTE. Positions 95–113 are enriched in polar residues; sequence TAVSQGNSNTVDGESTSGT. Residues 168–409 enclose the Protein kinase domain; the sequence is ISELQWLGSG…FRQTLMHLDI (242 aa). Residues 174-182 and lysine 195 contribute to the ATP site; that span reads LGSGAQGAV. The Proton acceptor role is filled by aspartate 279. Leucine-zipper stretches follow at residues 433–454 and 486–507; these read VKKH…DEEL and LSAI…EQAV. Disordered stretches follow at residues 534–599, 611–655, 744–834, and 846–908; these read KRKG…RGSH, AQEN…HHPR, DIPS…RRQR, and STFS…GLSD. Residues 567–581 show a composition bias toward low complexity; it reads SPLSGSPKMSTSSSK. Residues 582–594 show a composition bias toward basic residues; sequence SRYRSKPRHRRGN. Composition is skewed to polar residues over residues 611–629 and 785–795; these read AQEN…SQYP and RSESSLGTSHL. Acidic residues predominate over residues 814–827; the sequence is DSSEEEEGEVDSEV. The tract at residues 815–828 is acidic; the sequence is SSEEEEGEVDSEVE. The segment covering 846-855 has biased composition (polar residues); the sequence is STFSSENFSV. Over residues 873-887 the composition is skewed to basic and acidic residues; sequence LADKLEDRLAEKLDD.

The protein belongs to the protein kinase superfamily. STE Ser/Thr protein kinase family. MAP kinase kinase kinase subfamily. As to quaternary structure, homodimer; forms dimers through the leucine-zipper motif. Interacts with the C-terminus of MAPK8IP1 through the kinase catalytic domain. Binds PRDX3. Associates with the IKK complex through the kinase domain. Requires Mg(2+) as cofactor. Post-translationally, autophosphorylated on serine and threonine residues. As to expression, expressed in the adult brain, liver, placenta and pancreas, with expression strongest in the pancreas.

The protein resides in the cytoplasm. The protein localises to the membrane. It catalyses the reaction L-seryl-[protein] + ATP = O-phospho-L-seryl-[protein] + ADP + H(+). The enzyme catalyses L-threonyl-[protein] + ATP = O-phospho-L-threonyl-[protein] + ADP + H(+). Activated by autophosphorylation and homodimerization. Functionally, activates the JUN N-terminal pathway through activation of the MAP kinase kinase MAP2K7. Acts synergistically with PRDX3 to regulate the activation of NF-kappa-B in the cytosol. This activation is kinase-dependent and involves activating the IKK complex, the IKBKB-containing complex that phosphorylates inhibitors of NF-kappa-B. This chain is Mitogen-activated protein kinase kinase kinase 13, found in Homo sapiens (Human).